A 1382-amino-acid polypeptide reads, in one-letter code: DNA-directed RNA polymerase subunit beta (1382 aa).

The protein belongs to the RNA polymerase beta chain family. As to quaternary structure, the RNAP catalytic core consists of 2 alpha, 1 beta, 1 beta' and 1 omega subunit. When a sigma factor is associated with the core the holoenzyme is formed, which can initiate transcription.

It carries out the reaction RNA(n) + a ribonucleoside 5'-triphosphate = RNA(n+1) + diphosphate. Its function is as follows. DNA-dependent RNA polymerase catalyzes the transcription of DNA into RNA using the four ribonucleoside triphosphates as substrates. The polypeptide is DNA-directed RNA polymerase subunit beta (Anaplasma marginale (strain Florida)).